The following is a 489-amino-acid chain: Rhamnulokinase (489 aa).

Position 13–17 (A13–R17) interacts with ATP. A disulfide bridge links C68 with C222. Substrate contacts are provided by residues G83 and H236–T238. D237 serves as the catalytic Proton acceptor. T259 contributes to the ATP binding site. Position 296 (N296) interacts with substrate. Residue Q304 coordinates ATP. A disulfide bond links C353 and C370. G402 provides a ligand contact to ATP. C413 and C417 are joined by a disulfide.

Belongs to the rhamnulokinase family. Monomer. Requires Mg(2+) as cofactor.

The enzyme catalyses L-rhamnulose + ATP = L-rhamnulose 1-phosphate + ADP + H(+). The protein operates within carbohydrate degradation; L-rhamnose degradation; glycerone phosphate from L-rhamnose: step 2/3. In terms of biological role, involved in the catabolism of L-rhamnose (6-deoxy-L-mannose). Catalyzes the transfer of the gamma-phosphate group from ATP to the 1-hydroxyl group of L-rhamnulose to yield L-rhamnulose 1-phosphate. The chain is Rhamnulokinase from Escherichia coli O139:H28 (strain E24377A / ETEC).